A 663-amino-acid polypeptide reads, in one-letter code: Innate immunity activator protein (663 aa).

A disordered region spans residues 1–68 (MLQMPKLNEI…RLPTQPGPGW (68 aa)). Low complexity predominate over residues 40 to 50 (RAQGQAGGARA). Positions 118–147 (AVHKQQRALEARLEACLEELRRLCLREAEL) form a coiled coil. Residues 164–170 (PKVRRRI) carry the Nuclear localization signal (NLS) 1 motif. Disordered stretches follow at residues 242–362 (RRRN…ASSL), 378–425 (VPGQ…PRRR), and 444–493 (PLPH…RHRG). The span at 259-272 (ELSASDDSSLSDGL) shows a compositional bias: low complexity. The segment covering 282–298 (PKPPPESPAPPSRPLPP) has biased composition (pro residues). A compositionally biased stretch (basic and acidic residues) spans 327–340 (TSLDHPYEKPRKSS). The Nuclear localization signal (NLS) 2 motif lies at 332-338 (PYEKPRK). A compositionally biased stretch (polar residues) spans 350–361 (ATTPQDGPSASS). The short motif at 422 to 428 (PRRRPTH) is the Nuclear localization signal (NLS) 3 element. Over residues 455–475 (EDSGSDVSSISHPTSPGSSSP) the composition is skewed to low complexity.

In terms of assembly, interacts with IRAK1, NOD2 and RIPK2; the interaction takes place upon PRR stimulation. Interacts with YWHAQ/14-3-3T; the interaction increases upon PRR stimulation and is required for cellular signaling pathway activation and cytokine secretion. Interacts (via N-terminal domain) with CYTH1 and CYTH2 (via their N-terminal domains). Interacts with FBXW11 and BTRC; associates with SCF E3 ubiquitin-protein ligase complexes. In terms of tissue distribution, highly expressed in intestinal myeloid-derived cells and expressed in monocyte-derived macrophages upon induction by PRR activation.

The protein localises to the nucleus. It is found in the cytoplasm. Functionally, expressed in peripheral macrophages and intestinal myeloid-derived cells, is required for optimal PRR (pattern recognition receptor)-induced signaling, cytokine secretion, and bacterial clearance. Upon stimulation of a broad range of PRRs (pattern recognition receptor) such as NOD2 or TLR2, TLR3, TLR4, TLR5, TLR7 and TLR9, associates with YWHAQ/14-3-3T, which in turn leads to the recruitment and activation of MAP kinases and NF-kappa-B signaling complexes that amplifies PRR-induced downstream signals and cytokine secretion. In the intestine, regulates adherens junction stability by regulating the degradation of CYTH1 and CYTH2, probably acting as substrate cofactor for SCF E3 ubiquitin-protein ligase complexes. Stabilizes adherens junctions by limiting CYTH1-dependent ARF6 activation. The chain is Innate immunity activator protein from Homo sapiens (Human).